Reading from the N-terminus, the 130-residue chain is Protein ApaG (130 aa).

An ApaG domain is found at 3 to 127 (SAVTRGIEVT…FSLDVPEQRR (125 aa)).

The protein is Protein ApaG of Brucella abortus (strain S19).